Here is a 497-residue protein sequence, read N- to C-terminus: Dol-P-Man:Man(7)GlcNAc(2)-PP-Dol alpha-1,6-mannosyltransferase (497 aa).

Transmembrane regions (helical) follow at residues 10–30 (FLQS…YVVM), 71–91 (FIGA…ISCL), 92–112 (GFPK…IILS), 125–145 (FGNQ…HFLF), 154–174 (ILAL…NFYP), 178–198 (FLIF…GPIG), and 215–235 (YCVG…SIMW). Residue N253 is glycosylated (N-linked (GlcNAc...) asparagine). 4 helical membrane-spanning segments follow: residues 263-285 (IHWY…SLLG), 292-312 (VPFF…LPHK), 316-336 (FIIS…SRIY), and 346-366 (LVNM…VVTF). N435 is a glycosylation site (N-linked (GlcNAc...) asparagine).

Belongs to the glycosyltransferase 22 family.

It localises to the endoplasmic reticulum membrane. The catalysed reaction is an alpha-D-Man-(1-&gt;2)-alpha-D-Man-(1-&gt;2)-alpha-D-Man-(1-&gt;3)-[alpha-D-Man-(1-&gt;2)-alpha-D-Man-(1-&gt;3)-alpha-D-Man-(1-&gt;6)]-beta-D-Man-(1-&gt;4)-beta-D-GlcNAc-(1-&gt;4)-alpha-D-GlcNAc-diphospho-di-trans,poly-cis-dolichol + a di-trans,poly-cis-dolichyl beta-D-mannosyl phosphate = an alpha-D-Man-(1-&gt;2)-alpha-D-Man-(1-&gt;2)-alpha-D-Man-(1-&gt;3)-[alpha-D-Man-(1-&gt;2)-alpha-D-Man-(1-&gt;3)-[alpha-D-Man-(1-&gt;6)]-alpha-D-Man-(1-&gt;6)]-beta-D-Man-(1-&gt;4)-beta-D-GlcNAc-(1-&gt;4)-alpha-D-GlcNAc-diphospho-di-trans,poly-cis-dolichol + a di-trans,poly-cis-dolichyl phosphate + H(+). It functions in the pathway protein modification; protein glycosylation. Mannosyltransferase that operates in the biosynthetic pathway of dolichol-linked oligosaccharides, the glycan precursors employed in protein asparagine (N)-glycosylation. The assembly of dolichol-linked oligosaccharides begins on the cytosolic side of the endoplasmic reticulum membrane and finishes in its lumen. The sequential addition of sugars to dolichol pyrophosphate produces dolichol-linked oligosaccharides containing fourteen sugars, including two GlcNAcs, nine mannoses and three glucoses. Once assembled, the oligosaccharide is transferred from the lipid to nascent proteins by oligosaccharyltransferases. In the lumen of the endoplasmic reticulum, adds the eighth mannose residue in an alpha-1,6 linkage onto Man(7)GlcNAc(2)-PP-dolichol to produce Man(8)GlcNAc(2)-PP-dolichol. The polypeptide is Dol-P-Man:Man(7)GlcNAc(2)-PP-Dol alpha-1,6-mannosyltransferase (ALG12) (Arabidopsis thaliana (Mouse-ear cress)).